We begin with the raw amino-acid sequence, 188 residues long: Small ribosomal subunit protein uS7 (188 aa).

Belongs to the universal ribosomal protein uS7 family. As to quaternary structure, part of the 30S ribosomal subunit.

Functionally, one of the primary rRNA binding proteins, it binds directly to 16S rRNA where it nucleates assembly of the head domain of the 30S subunit. Is located at the subunit interface close to the decoding center. This Methanococcus maripaludis (strain DSM 14266 / JCM 13030 / NBRC 101832 / S2 / LL) protein is Small ribosomal subunit protein uS7.